The following is a 212-amino-acid chain: Kynurenine formamidase (212 aa).

W18 lines the substrate pocket. The Zn(2+) site is built by H48, H52, and D54. The Proton donor/acceptor role is filled by H58. Zn(2+)-binding residues include H160 and E172.

This sequence belongs to the Cyclase 1 superfamily. KynB family. In terms of assembly, homodimer. Requires Zn(2+) as cofactor.

The enzyme catalyses N-formyl-L-kynurenine + H2O = L-kynurenine + formate + H(+). The protein operates within amino-acid degradation; L-tryptophan degradation via kynurenine pathway; L-kynurenine from L-tryptophan: step 2/2. Catalyzes the hydrolysis of N-formyl-L-kynurenine to L-kynurenine, the second step in the kynurenine pathway of tryptophan degradation. This Paraburkholderia phytofirmans (strain DSM 17436 / LMG 22146 / PsJN) (Burkholderia phytofirmans) protein is Kynurenine formamidase.